Consider the following 133-residue polypeptide: Small ribosomal subunit protein uS11 (133 aa).

The protein belongs to the universal ribosomal protein uS11 family. In terms of assembly, part of the 30S ribosomal subunit. Interacts with proteins S7 and S18. Binds to IF-3.

Functionally, located on the platform of the 30S subunit, it bridges several disparate RNA helices of the 16S rRNA. Forms part of the Shine-Dalgarno cleft in the 70S ribosome. This is Small ribosomal subunit protein uS11 from Ralstonia pickettii (strain 12J).